Here is a 451-residue protein sequence, read N- to C-terminus: Nicotinamide phosphoribosyltransferase (451 aa).

R209 is a binding site for diphosphate. D232 is a beta-nicotinamide D-ribonucleotide binding site. Diphosphate-binding residues include H248 and R309. Residues 309–311 (RPD), 364–365 (GD), and R403 contribute to the beta-nicotinamide D-ribonucleotide site.

The protein belongs to the NAPRTase family.

It catalyses the reaction beta-nicotinamide D-ribonucleotide + diphosphate = 5-phospho-alpha-D-ribose 1-diphosphate + nicotinamide + H(+). The protein operates within cofactor biosynthesis; NAD(+) biosynthesis; nicotinamide D-ribonucleotide from 5-phospho-alpha-D-ribose 1-diphosphate and nicotinamide: step 1/1. Functionally, catalyzes the condensation of nicotinamide with 5-phosphoribosyl-1-pyrophosphate to yield nicotinamide mononucleotide, an intermediate in the biosynthesis of NAD. In Mycoplasma pneumoniae (strain ATCC 29342 / M129 / Subtype 1) (Mycoplasmoides pneumoniae), this protein is Nicotinamide phosphoribosyltransferase.